The primary structure comprises 163 residues: uncharacterized protein (163 aa).

The interval 144-163 is disordered; sequence WSHSQSQLGTPGRGKGALGF. Gly residues predominate over residues 154–163; it reads PGRGKGALGF.

This is an uncharacterized protein from Homo sapiens (Human).